The sequence spans 102 residues: Citrate lyase acyl carrier protein (102 aa).

Ser14 carries the post-translational modification O-(phosphoribosyl dephospho-coenzyme A)serine.

This sequence belongs to the CitD family. Oligomer with a subunit composition of (alpha,beta,gamma)6.

Its subcellular location is the cytoplasm. Covalent carrier of the coenzyme of citrate lyase. In Streptococcus equi subsp. zooepidemicus (strain MGCS10565), this protein is Citrate lyase acyl carrier protein.